Reading from the N-terminus, the 96-residue chain is Probable quinol oxidase subunit 4 (96 aa).

Transmembrane regions (helical) follow at residues 8–28 (TVGF…TLYT), 36–56 (LTII…MFMH), and 68–88 (FKVI…YWVM).

This sequence belongs to the cytochrome c oxidase bacterial subunit 4 family.

The protein resides in the cell membrane. It catalyses the reaction 2 a quinol + O2 = 2 a quinone + 2 H2O. In terms of biological role, catalyzes quinol oxidation with the concomitant reduction of oxygen to water. In Staphylococcus aureus (strain USA300), this protein is Probable quinol oxidase subunit 4 (qoxD).